An 88-amino-acid chain; its full sequence is Small ribosomal subunit protein bS16 (88 aa).

The protein belongs to the bacterial ribosomal protein bS16 family.

In Geotalea daltonii (strain DSM 22248 / JCM 15807 / FRC-32) (Geobacter daltonii), this protein is Small ribosomal subunit protein bS16.